The following is a 348-amino-acid chain: Probable protein phosphatase 2C 35 (348 aa).

Residues 11-24 (RYPSSSSDGDSRGP) are compositionally biased toward low complexity. Residues 11–40 (RYPSSSSDGDSRGPLEANGVLKGKDQKPLG) form a disordered region. One can recognise a PPM-type phosphatase domain in the interval 52–342 (VYSVLSQRGY…DDITIIIVQI (291 aa)). Mn(2+)-binding residues include D93, G94, D289, and D333.

It belongs to the PP2C family. Mg(2+) serves as cofactor. The cofactor is Mn(2+).

It carries out the reaction O-phospho-L-seryl-[protein] + H2O = L-seryl-[protein] + phosphate. It catalyses the reaction O-phospho-L-threonyl-[protein] + H2O = L-threonyl-[protein] + phosphate. This Arabidopsis thaliana (Mouse-ear cress) protein is Probable protein phosphatase 2C 35.